The sequence spans 214 residues: uncharacterized protein (214 aa).

2 consecutive transmembrane segments (helical) span residues 19–39 (IAIFALAFISFILILIISYIL) and 50–70 (LALFLMDNLYSILLKIFLLIG).

The protein resides in the cell membrane. This is an uncharacterized protein from Methanocaldococcus jannaschii (strain ATCC 43067 / DSM 2661 / JAL-1 / JCM 10045 / NBRC 100440) (Methanococcus jannaschii).